The chain runs to 201 residues: Protein VirD3 (201 aa).

2 disordered regions span residues 28–51 (ASSSALSNVQGDVRDRPIPTSSSR) and 139–171 (RVNSDRRLPTDAENHPETRDPRKGRGSHGVTPA). Basic and acidic residues predominate over residues 141-161 (NSDRRLPTDAENHPETRDPRK).

This Rhizobium radiobacter (Agrobacterium tumefaciens) protein is Protein VirD3 (virD3).